The primary structure comprises 366 residues: Melatonin receptor type 1A (366 aa).

At 1-45 (MAGRLWGSPGGTPKGNGSSALLNVSQAAPGAGDGVRPRPSWLAAT) the chain is on the extracellular side. N-linked (GlcNAc...) asparagine glycans are attached at residues N16 and N23. A helical membrane pass occupies residues 46–66 (LASILIFTIVVDIVGNLLVVL). The Cytoplasmic portion of the chain corresponds to 67 to 79 (SVYRNKKLRNAGN). The helical transmembrane segment at 80–100 (VFVVSLAVADLLVAVYPYPLA) threads the bilayer. Over 101 to 118 (LASIVNNGWSLSSLHCQL) the chain is Extracellular. A disulfide bridge links C116 with C193. A helical membrane pass occupies residues 119–139 (SGFLMGLSVIGSVFSITGIAI). Residues 140-158 (NRYCCICHSLRYGKLYSGT) are Cytoplasmic-facing. Residues 159 to 179 (NSLCYVFLIWTLTLVAIVPNL) traverse the membrane as a helical segment. Residues 180-203 (CVGTLQYDPRIYSCTFTQSVSSAY) are Extracellular-facing. The helical transmembrane segment at 204–224 (TIAVVVFHFIVPMLVVVFCYL) threads the bilayer. Residues 225–256 (RIWALVLQVRWKVKPDNKPKLKPQDFRNFVTM) are Cytoplasmic-facing. Residues 257-277 (FVVFVLFAICWAPLNFIGLVV) traverse the membrane as a helical segment. Residues 278 to 290 (ASDPASMAPRIPE) lie on the Extracellular side of the membrane. The chain crosses the membrane as a helical span at residues 291–311 (WLFVASYYMAYFNSCLNAIIY). The Cytoplasmic segment spans residues 312-366 (GLLNQNFRQEYRKIIVSLCTTKMFFVDSSNHVADRIKRKPSPLIANHNLIKVDSV).

This sequence belongs to the G-protein coupled receptor 1 family.

It is found in the cell membrane. High affinity receptor for melatonin. Likely to mediate the reproductive and circadian actions of melatonin. The activity of this receptor is mediated by pertussis toxin sensitive G proteins that inhibit adenylate cyclase activity. Possibly involved in sleep induction, by melatonin activation of the potassium channel KCNMA1/BK and the dissociation of G-beta and G-gamma subunits, thereby decreasing synaptic transmission. This Ovis aries (Sheep) protein is Melatonin receptor type 1A (MTNR1A).